Here is a 326-residue protein sequence, read N- to C-terminus: ELAV-like protein 1 (326 aa).

S2 is subject to N-acetylserine. S2 is subject to Phosphoserine. The 79-residue stretch at 20 to 98 (TNLIVNYLPQ…KTIKVSYARP (79 aa)) folds into the RRM 1 domain. 2 positions are modified to phosphoserine: S100 and S158. Positions 106–186 (ANLYISGLPR…EPITVKFAAN (81 aa)) constitute an RRM 2 domain. K191 participates in a covalent cross-link: Glycyl lysine isopeptide (Lys-Gly) (interchain with G-Cter in SUMO2). Phosphoserine is present on residues S197 and S202. R206 bears the Omega-N-methylarginine mark. Position 217 is an asymmetric dimethylarginine; by CARM1; alternate (R217). An Omega-N-methylarginine; alternate modification is found at R217. Phosphoserine is present on residues S221 and S318. The region spanning 244–322 (WCIFIYNLGQ…KILQVSFKTN (79 aa)) is the RRM 3 domain.

This sequence belongs to the RRM elav family. Monomer and homodimer (in vitro). Interacts with ANP32A. Interacts with ZNF385A; the interaction is indirect and mRNA-dependent and may regulate p53/TP53 expression. Identified in a mRNP complex, at least composed of DHX9, DDX3X, ELAVL1, HNRNPU, IGF2BP1, ILF3, PABPC1, PCBP2, PTBP2, STAU1, STAU2, SYNCRIP and YBX1. Interacts with AGO1 and AGO2. Interacts with IGF2BP1; the interaction is enhanced by SEPIN14P20 peptide RBPR. Interacts with IGF2BP2 and IGF2BP3. Interacts with HNRNPL. Interacts with DHX36; this interaction occurs in a RNA-dependent manner. Interacts with ILF3; this interaction occurs in a RNA-dependent manner. Interacts with PLEKHN1. Interacts with SHFL; the interaction increases in presence of RNA. Interacts with YBX1; interaction recruits ELAVL1 on C5-methylcytosine (m5C)-containing mRNAs, thereby promoting mRNA stability. Interacts with FXR1. Post-translationally, phosphorylated by MAPKAPK2. Phosphorylated by PRKCD. Methylated at Arg-217 by CARM1 in macrophages in response to LPS challenge. Ubiquitous. Detected in brain, liver, thymus and muscle.

It localises to the cytoplasm. It is found in the nucleus. The protein resides in the stress granule. The protein localises to the P-body. Its function is as follows. RNA-binding protein that binds to the 3'-UTR region of mRNAs and increases their stability. Involved in embryonic stem cell (ESC) differentiation: preferentially binds mRNAs that are not methylated by N6-methyladenosine (m6A), stabilizing them, promoting ESC differentiation. Has also been shown to be capable of binding to m6A-containing mRNAs and contributes to MYC stability by binding to m6A-containing MYC mRNAs. Binds to poly-U elements and AU-rich elements (AREs) in the 3'-UTR of target mRNAs. Binds avidly to the AU-rich element in FOS and IL3/interleukin-3 mRNAs. In the case of the FOS AU-rich element, binds to a core element of 27 nucleotides that contain AUUUA, AUUUUA, and AUUUUUA motifs. Binds preferentially to the 5'-UUUU[AG]UUU-3' motif in vitro. With ZNF385A, binds the 3'-UTR of p53/TP53 mRNA to control their nuclear export induced by CDKN2A. Hence, may regulate p53/TP53 expression and mediate in part the CDKN2A anti-proliferative activity. May also bind with ZNF385A the CCNB1 mRNA. Increases the stability of the leptin mRNA harboring an AU-rich element (ARE) in its 3' UTR. In Homo sapiens (Human), this protein is ELAV-like protein 1 (ELAVL1).